We begin with the raw amino-acid sequence, 71 residues long: uncharacterized protein (71 aa).

The segment covering 1 to 16 (MAKSQAKKKRGHRLRN) has biased composition (basic residues). Disordered regions lie at residues 1 to 39 (MAKSQAKKKRGHRLRNGGRDVLLSRGSTPSFSTHGRMTK) and 51 to 71 (KNPYDHTAVDDKDFFVPQKAA). The span at 25 to 35 (RGSTPSFSTHG) shows a compositional bias: polar residues. A compositionally biased stretch (basic and acidic residues) spans 51 to 64 (KNPYDHTAVDDKDF).

This is an uncharacterized protein from Bacillus subtilis (strain 168).